The sequence spans 338 residues: 1-aminocyclopropane-1-carboxylate deaminase (338 aa).

Lys51 carries the N6-(pyridoxal phosphate)lysine modification. Ser78 (nucleophile) is an active-site residue.

This sequence belongs to the ACC deaminase/D-cysteine desulfhydrase family. Homotrimer. Requires pyridoxal 5'-phosphate as cofactor.

It catalyses the reaction 1-aminocyclopropane-1-carboxylate + H2O = 2-oxobutanoate + NH4(+). Its function is as follows. Catalyzes a cyclopropane ring-opening reaction, the irreversible conversion of 1-aminocyclopropane-1-carboxylate (ACC) to ammonia and alpha-ketobutyrate. Allows growth on ACC as a nitrogen source. This is 1-aminocyclopropane-1-carboxylate deaminase from Burkholderia vietnamiensis (strain G4 / LMG 22486) (Burkholderia cepacia (strain R1808)).